We begin with the raw amino-acid sequence, 303 residues long: Sodium/potassium-transporting ATPase subunit beta-1 (303 aa).

At 1 to 34 the chain is on the cytoplasmic side; sequence MPAATKDSDGGWKKFLWNSEKKEFLGRTGGSWAK. Residues 35 to 55 form a helical; Signal-anchor for type II membrane protein membrane-spanning segment; it reads ILLFYVIFYGCLAGIFIGTIQ. Over 56-303 the chain is Extracellular; that stretch reads ALLLTINDFK…FDVKFTINES (248 aa). Asn113 carries an N-linked (GlcNAc...) asparagine glycan. 2 cysteine pairs are disulfide-bonded: Cys126/Cys149 and Cys159/Cys175. Residues Asn194 and Asn264 are each glycosylated (N-linked (GlcNAc...) asparagine). A disulfide bridge links Cys214 with Cys275.

The protein belongs to the X(+)/potassium ATPases subunit beta family. In terms of assembly, the sodium/potassium-transporting ATPase is composed of a catalytic alpha subunit, an auxiliary non-catalytic beta subunit and an additional regulatory subunit. As to expression, detected in all tissues except liver and cardiac muscle. Highest levels found in intestine, ovary and kidney with marginally lower levels in brain, spleen, esophagus, eye and pancreas, intermediate levels in gill and low levels in white and red skeletal muscle.

It is found in the cell membrane. In terms of biological role, this is the non-catalytic component of the active enzyme, which catalyzes the hydrolysis of ATP coupled with the exchange of Na(+) and K(+) ions across the plasma membrane. The beta subunit regulates, through assembly of alpha/beta heterodimers, the number of sodium pumps transported to the plasma membrane. This is Sodium/potassium-transporting ATPase subunit beta-1 (atp1b1) from Anguilla anguilla (European freshwater eel).